The chain runs to 99 residues: Malonate decarboxylase acyl carrier protein (99 aa).

Position 25 is an O-(phosphoribosyl dephospho-coenzyme A)serine (Ser25).

This sequence belongs to the MdcC family. Covalently binds the prosthetic group of malonate decarboxylase.

It is found in the cytoplasm. Its function is as follows. Subunit of malonate decarboxylase, it is an acyl carrier protein to which acetyl and malonyl thioester residues are bound via a 2'-(5''-phosphoribosyl)-3'-dephospho-CoA prosthetic group and turn over during the catalytic mechanism. The polypeptide is Malonate decarboxylase acyl carrier protein (Pseudomonas putida (strain GB-1)).